A 538-amino-acid polypeptide reads, in one-letter code: Chaperonin GroEL (538 aa).

ATP-binding positions include 29 to 32, 86 to 90, G413, 476 to 478, and D492; these read TLGP, DGTTT, and NAA.

It belongs to the chaperonin (HSP60) family. As to quaternary structure, forms a cylinder of 14 subunits composed of two heptameric rings stacked back-to-back. Interacts with the co-chaperonin GroES.

Its subcellular location is the cytoplasm. It carries out the reaction ATP + H2O + a folded polypeptide = ADP + phosphate + an unfolded polypeptide.. In terms of biological role, together with its co-chaperonin GroES, plays an essential role in assisting protein folding. The GroEL-GroES system forms a nano-cage that allows encapsulation of the non-native substrate proteins and provides a physical environment optimized to promote and accelerate protein folding. The polypeptide is Chaperonin GroEL (Bacillus sp. (strain PS3)).